The following is a 749-amino-acid chain: Small G protein signaling modulator 3 (749 aa).

A Rab-GAP TBC domain is found at 113-304; sequence GIPHGMRPQL…RIWDLFFYEG (192 aa). Ser405 bears the Phosphoserine mark. A coiled-coil region spans residues 414 to 438; that stretch reads EDDLEALKAKNIKQTELVADLREAI. The 60-residue stretch at 479–538 folds into the SH3 domain; it reads SHRRRAKALLDFERHDDDELGFRKNDIITIISQKDEHCWVGELNGLRGWFPAKFVEVLDE. An RUN domain is found at 554–717; it reads GVTDLVRGTL…FAFSLSQDWE (164 aa).

The protein belongs to the small G protein signaling modulator family. In terms of assembly, interacts with GJA1. Interaction with GJA1 induces its degradation. Interacts (via RUN domain) with NF2 (via C-terminus). Interacts with RAB3A, RAB4A, RAB5A, RAB8A, RAB11A, RAP1A, RAP1B, RAP2A, RAP2B and PDCD6I. No interaction with RAB27A. No interaction with GJB1 or GJD2. As to expression, expressed in brain, liver, kidney and testis. Moderately expressed in heart, very weakly in lung and muscle. Not expressed in spleen.

The protein localises to the cytoplasm. In terms of biological role, may play a cooperative role in NF2-mediated growth suppression of cells. May act as a modulator of small G protein RAB- and RAP-mediated neuronal signal transduction and vesicular transportation pathways. This is Small G protein signaling modulator 3 from Rattus norvegicus (Rat).